We begin with the raw amino-acid sequence, 398 residues long: LL-diaminopimelate aminotransferase (398 aa).

Residues Y14 and G41 each coordinate substrate. Pyridoxal 5'-phosphate contacts are provided by residues Y71, 104-105 (AK), Y128, N174, Y205, and 233-235 (SFS). Substrate contacts are provided by K105, Y128, and N174. Position 236 is an N6-(pyridoxal phosphate)lysine (K236). 2 residues coordinate pyridoxal 5'-phosphate: R244 and N275. Residues N275 and R368 each coordinate substrate.

Belongs to the class-I pyridoxal-phosphate-dependent aminotransferase family. LL-diaminopimelate aminotransferase subfamily. In terms of assembly, homodimer. Pyridoxal 5'-phosphate is required as a cofactor.

It catalyses the reaction (2S,6S)-2,6-diaminopimelate + 2-oxoglutarate = (S)-2,3,4,5-tetrahydrodipicolinate + L-glutamate + H2O + H(+). It functions in the pathway amino-acid biosynthesis; L-lysine biosynthesis via DAP pathway; LL-2,6-diaminopimelate from (S)-tetrahydrodipicolinate (aminotransferase route): step 1/1. In terms of biological role, involved in the synthesis of meso-diaminopimelate (m-DAP or DL-DAP), required for both lysine and peptidoglycan biosynthesis. Catalyzes the direct conversion of tetrahydrodipicolinate to LL-diaminopimelate. In Chlamydia felis (strain Fe/C-56) (Chlamydophila felis), this protein is LL-diaminopimelate aminotransferase.